Reading from the N-terminus, the 91-residue chain is Small ribosomal subunit protein uS19 (91 aa).

Belongs to the universal ribosomal protein uS19 family.

Protein S19 forms a complex with S13 that binds strongly to the 16S ribosomal RNA. The protein is Small ribosomal subunit protein uS19 of Alcanivorax borkumensis (strain ATCC 700651 / DSM 11573 / NCIMB 13689 / SK2).